We begin with the raw amino-acid sequence, 329 residues long: MLESMYYEFFFIFPKERELFESFLLDATDLALEESSLEDLKAFDDKETIGFISQSSWRYFATHGPLKEDLKEKLPHLDHFVILRSEKDLNSSLIPALESFCLSLQENLQNEFDFFYLSRNLASKDWLEAYKQAILPVQCGKFYIHPSWHQKPSHIATDFSIMIDPALAFGSGHHESTSMCLELLSNLDLKHKNALDVGCGSGILSIALKKQGVSTLVACDTDSLAIEETLKNFSLNQISLSTQDEIICGSTQKIQGHFDIIVANIVADVIKSLYSEFVRLCNHTLILSGILETHLNSVLQIYYNGFEILEQQQRNEWVALKLLKKQSIN.

Threonine 177, glycine 198, aspartate 220, and asparagine 264 together coordinate S-adenosyl-L-methionine.

It belongs to the methyltransferase superfamily. PrmA family.

The protein localises to the cytoplasm. It carries out the reaction L-lysyl-[protein] + 3 S-adenosyl-L-methionine = N(6),N(6),N(6)-trimethyl-L-lysyl-[protein] + 3 S-adenosyl-L-homocysteine + 3 H(+). In terms of biological role, methylates ribosomal protein L11. The protein is Ribosomal protein L11 methyltransferase of Helicobacter acinonychis (strain Sheeba).